A 104-amino-acid polypeptide reads, in one-letter code: MSRFDNVAVTKQANVYFDGKCVSHTVEFADGTKKSVGVILPSTLTFNTGAPEVMETVAGACRVKLAGENEWKSYAAGQSFEVPANSSFEIEVAAEPYHYVCHFG.

It belongs to the nucleoside phosphorylase PpnP family.

The catalysed reaction is a purine D-ribonucleoside + phosphate = a purine nucleobase + alpha-D-ribose 1-phosphate. The enzyme catalyses adenosine + phosphate = alpha-D-ribose 1-phosphate + adenine. It carries out the reaction cytidine + phosphate = cytosine + alpha-D-ribose 1-phosphate. It catalyses the reaction guanosine + phosphate = alpha-D-ribose 1-phosphate + guanine. The catalysed reaction is inosine + phosphate = alpha-D-ribose 1-phosphate + hypoxanthine. The enzyme catalyses thymidine + phosphate = 2-deoxy-alpha-D-ribose 1-phosphate + thymine. It carries out the reaction uridine + phosphate = alpha-D-ribose 1-phosphate + uracil. It catalyses the reaction xanthosine + phosphate = alpha-D-ribose 1-phosphate + xanthine. Its function is as follows. Catalyzes the phosphorolysis of diverse nucleosides, yielding D-ribose 1-phosphate and the respective free bases. Can use uridine, adenosine, guanosine, cytidine, thymidine, inosine and xanthosine as substrates. Also catalyzes the reverse reactions. The polypeptide is Pyrimidine/purine nucleoside phosphorylase (Thiobacillus denitrificans (strain ATCC 25259 / T1)).